The following is a 523-amino-acid chain: GMP synthase [glutamine-hydrolyzing] (523 aa).

The 198-residue stretch at 8-205 (KILILDFGSQ…VVNICGCETK (198 aa)) folds into the Glutamine amidotransferase type-1 domain. Cys-85 (nucleophile) is an active-site residue. Residues His-179 and Glu-181 contribute to the active site. Residues 206–398 (WTAENIIEDA…LGLPAEMLNR (193 aa)) form the GMPS ATP-PPase domain. 233-239 (SGGVDSS) serves as a coordination point for ATP.

Homodimer.

The catalysed reaction is XMP + L-glutamine + ATP + H2O = GMP + L-glutamate + AMP + diphosphate + 2 H(+). Its pathway is purine metabolism; GMP biosynthesis; GMP from XMP (L-Gln route): step 1/1. Its function is as follows. Catalyzes the synthesis of GMP from XMP. This is GMP synthase [glutamine-hydrolyzing] from Glaesserella parasuis serovar 5 (strain SH0165) (Haemophilus parasuis).